The chain runs to 364 residues: tRNA-specific 2-thiouridylase MnmA 1 (364 aa).

ATP is bound by residues 10–17 (GMSGGVDS) and M36. C106 acts as the Nucleophile in catalysis. An intrachain disulfide couples C106 to C204. G130 contacts ATP. The interval 154-156 (KDQ) is interaction with tRNA. C204 acts as the Cysteine persulfide intermediate in catalysis. The interaction with tRNA stretch occupies residues 310–311 (RY).

This sequence belongs to the MnmA/TRMU family.

It localises to the cytoplasm. The enzyme catalyses S-sulfanyl-L-cysteinyl-[protein] + uridine(34) in tRNA + AH2 + ATP = 2-thiouridine(34) in tRNA + L-cysteinyl-[protein] + A + AMP + diphosphate + H(+). In terms of biological role, catalyzes the 2-thiolation of uridine at the wobble position (U34) of tRNA, leading to the formation of s(2)U34. The polypeptide is tRNA-specific 2-thiouridylase MnmA 1 (Caldanaerobacter subterraneus subsp. tengcongensis (strain DSM 15242 / JCM 11007 / NBRC 100824 / MB4) (Thermoanaerobacter tengcongensis)).